A 106-amino-acid chain; its full sequence is Insulin-like peptide 03 (106 aa).

The first 18 residues, 1 to 18 (MLFYFGLAVIFLIDSSQT), serve as a signal peptide directing secretion. A propeptide spanning residues 19–34 (QTLYKVNEVGGSQVDR) is cleaved from the precursor. Intrachain disulfides connect cysteine 37/cysteine 93, cysteine 49/cysteine 106, and cysteine 92/cysteine 97. The propeptide at 52–82 (KKRQNIPRKYGRDPNNILEKEEFAKRFLRVR) is c peptide.

Belongs to the insulin family.

It localises to the secreted. Functionally, insulin decreases blood glucose concentration. May have evolved to activate insulin receptors (INSR) in vertebrates. Molecular docking studies reveals unique interaction with the human insulin receptor. In vivo, insulin-like peptide injection reduces blood glucose levels in two models of zebrafish diabetes (streptozotocin- and glucose-induced). Also shorter swimming distance of zebrafish larvae, an effect which is not observed with human insulin. The chain is Insulin-like peptide 03 from Exaiptasia diaphana (Tropical sea anemone).